The following is a 524-amino-acid chain: Cytochrome P450 52A6 (524 aa).

The chain crosses the membrane as a helical span at residues 17–34; that stretch reads WYTVITLAALVFLISSNI. Cysteine 472 is a binding site for heme.

It belongs to the cytochrome P450 family. Heme is required as a cofactor.

The protein resides in the membrane. In terms of biological role, together with an NADPH cytochrome P450 the enzyme system catalyzes the terminal hydroxylation as the first step in the assimilation of alkanes and fatty acids. Preferentially hydroxylates hexadecane. This is Cytochrome P450 52A6 (CYP52A6) from Candida tropicalis (Yeast).